Here is a 271-residue protein sequence, read N- to C-terminus: NADPH-dependent 7-cyano-7-deazaguanine reductase (271 aa).

81–83 (IES) serves as a coordination point for substrate. An NADPH-binding site is contributed by 83 to 84 (SK). Cysteine 177 serves as the catalytic Thioimide intermediate. Aspartate 184 functions as the Proton donor in the catalytic mechanism. 216-217 (HE) is a binding site for substrate. 245–246 (RG) provides a ligand contact to NADPH.

This sequence belongs to the GTP cyclohydrolase I family. QueF type 2 subfamily. In terms of assembly, homodimer.

Its subcellular location is the cytoplasm. The enzyme catalyses 7-aminomethyl-7-carbaguanine + 2 NADP(+) = 7-cyano-7-deazaguanine + 2 NADPH + 3 H(+). Its pathway is tRNA modification; tRNA-queuosine biosynthesis. Functionally, catalyzes the NADPH-dependent reduction of 7-cyano-7-deazaguanine (preQ0) to 7-aminomethyl-7-deazaguanine (preQ1). In Xanthomonas oryzae pv. oryzae (strain MAFF 311018), this protein is NADPH-dependent 7-cyano-7-deazaguanine reductase.